Reading from the N-terminus, the 411-residue chain is Class E basic helix-loop-helix protein 40 (411 aa).

Residues M1–L20 form a disordered region. The tract at residues M1–Q139 is essential for interaction with BMAL1, E-box binding and repressor activity against the CLOCK-BMAL1 heterodimer. The 56-residue stretch at T52 to L107 folds into the bHLH domain. A necessary for interaction with RXRA and repressor activity against RXRA region spans residues L75–L79. The 34-residue stretch at F142–L175 folds into the Orange domain. Residue K159 forms a Glycyl lysine isopeptide (Lys-Gly) (interchain with G-Cter in SUMO1, SUMO2 and SUMO3) linkage. K167 is covalently cross-linked (Glycyl lysine isopeptide (Lys-Gly) (interchain with G-Cter in SUMO2)). The tract at residues F227–L294 is disordered. S235 carries the phosphoserine modification. Residues E248–V271 are compositionally biased toward basic and acidic residues. K279 is covalently cross-linked (Glycyl lysine isopeptide (Lys-Gly) (interchain with G-Cter in SUMO1); alternate). K279 is covalently cross-linked (Glycyl lysine isopeptide (Lys-Gly) (interchain with G-Cter in SUMO1, SUMO2 and SUMO3); alternate). Residue K279 forms a Glycyl lysine isopeptide (Lys-Gly) (interchain with G-Cter in SUMO2); alternate linkage. K288 is covalently cross-linked (Glycyl lysine isopeptide (Lys-Gly) (interchain with G-Cter in SUMO2)). S383 is subject to Phosphoserine.

Homodimer. Heterodimer with BHLHE41/DEC2. Interacts with ubiquitin-conjugating enzyme UBE2I/UBC9. Interacts with HDAC1, SUMO1, RXRA and BMAL1. Interacts with TCF3/E47. Post-translationally, ubiquitinated; which may lead to proteasomal degradation. Sumoylation inhibits its ubiquitination and promotes its negative regulation of the CLOCK-BMAL1 heterodimer transcriptional activator activity.

The protein resides in the cytoplasm. The protein localises to the nucleus. Functionally, transcriptional repressor involved in the regulation of the circadian rhythm by negatively regulating the activity of the clock genes and clock-controlled genes. Acts as the negative limb of a novel autoregulatory feedback loop (DEC loop) which differs from the one formed by the PER and CRY transcriptional repressors (PER/CRY loop). Both these loops are interlocked as it represses the expression of PER1/2 and in turn is repressed by PER1/2 and CRY1/2. Represses the activity of the circadian transcriptional activator: CLOCK-BMAL1|BMAL2 heterodimer by competing for the binding to E-box elements (5'-CACGTG-3') found within the promoters of its target genes. Negatively regulates its own expression and the expression of DBP and BHLHE41/DEC2. Acts as a corepressor of RXR and the RXR-LXR heterodimers and represses the ligand-induced RXRA and NR1H3/LXRA transactivation activity. May function as a transcriptional factor for neuronal differentiation. Represses the transcription of NR0B2 and attentuates the transactivation of NR0B2 by the CLOCK-BMAL1 complex. Drives the circadian rhythm of blood pressure through transcriptional repression of ATP1B1 in the cardiovascular system. The polypeptide is Class E basic helix-loop-helix protein 40 (Bhlhe40) (Mus musculus (Mouse)).